The chain runs to 134 residues: Histone H2A (134 aa).

The segment covering 1–10 (MTGGKSGGKA) has biased composition (gly residues). The segment at 1 to 26 (MTGGKSGGKASGSKSSAQSRSSKAGL) is disordered. N6-acetyllysine occurs at positions 5 and 9. Over residues 11 to 25 (SGSKSSAQSRSSKAG) the composition is skewed to low complexity. Position 107 is an N5-methylglutamine (Gln-107). Phosphoserine is present on Ser-131. Residues 131–132 (SQ) carry the [ST]-Q motif motif.

The protein belongs to the histone H2A family. In terms of assembly, the nucleosome is a histone octamer containing two molecules each of H2A, H2B, H3 and H4 assembled in one H3-H4 heterotetramer and two H2A-H2B heterodimers. The octamer wraps approximately 147 bp of DNA. Post-translationally, phosphorylated to form H2AS128ph (gamma-H2A) in response to DNA double-strand breaks (DSBs) generated by exogenous genotoxic agents and by stalled replication forks. Phosphorylation is dependent on the DNA damage checkpoint kinases MEC1/ATR and TEL1/ATM, spreads on either side of a detected DSB site and may mark the surrounding chromatin for recruitment of proteins required for DNA damage signaling and repair. Gamma-H2A is removed from the DNA prior to the strand invasion-primer extension step of the repair process and subsequently dephosphorylated. Dephosphorylation is necessary for efficient recovery from the DNA damage checkpoint. In terms of processing, acetylated by ESA1 to form H2AK4ac and H2AK7ac.

The protein resides in the nucleus. It is found in the chromosome. Core component of nucleosome which plays a central role in DNA double strand break (DSB) repair. Nucleosomes wrap and compact DNA into chromatin, limiting DNA accessibility to the cellular machineries which require DNA as a template. Histones thereby play a central role in transcription regulation, DNA repair, DNA replication and chromosomal stability. DNA accessibility is regulated via a complex set of post-translational modifications of histones, also called histone code, and nucleosome remodeling. This is Histone H2A (HTA1) from Phaeosphaeria nodorum (strain SN15 / ATCC MYA-4574 / FGSC 10173) (Glume blotch fungus).